The sequence spans 432 residues: Adenylosuccinate synthetase (432 aa).

GTP is bound by residues 13–19 and 41–43; these read GDEGKGK and GHT. Asp-14 serves as the catalytic Proton acceptor. Asp-14 and Gly-41 together coordinate Mg(2+). Residues 14–17, 39–42, Thr-130, Arg-144, Gln-225, Thr-240, and Arg-304 each bind IMP; these read DEGK and NAGH. The active-site Proton donor is the His-42. Substrate is bound at residue 300–306; it reads ATTGRRR. Residues Arg-306, 332–334, and 415–417 each bind GTP; these read KLD and STG.

It belongs to the adenylosuccinate synthetase family. In terms of assembly, homodimer. Requires Mg(2+) as cofactor.

The protein localises to the cytoplasm. The catalysed reaction is IMP + L-aspartate + GTP = N(6)-(1,2-dicarboxyethyl)-AMP + GDP + phosphate + 2 H(+). It functions in the pathway purine metabolism; AMP biosynthesis via de novo pathway; AMP from IMP: step 1/2. Plays an important role in the de novo pathway of purine nucleotide biosynthesis. Catalyzes the first committed step in the biosynthesis of AMP from IMP. The sequence is that of Adenylosuccinate synthetase from Baumannia cicadellinicola subsp. Homalodisca coagulata.